The primary structure comprises 79 residues: U-actitoxin-Avd8b (79 aa).

Residues 1 to 19 (MKSLVIVFVVLLGVAMISA) form the signal peptide. The propeptide occupies 20–36 (NEEELLAILQDQRNDAR).

It belongs to the sea anemone 8 toxin family.

The protein resides in the secreted. Its subcellular location is the nematocyst. This is U-actitoxin-Avd8b from Anemonia viridis (Snakelocks anemone).